A 295-amino-acid chain; its full sequence is Ribosomal RNA small subunit methyltransferase A (295 aa).

The S-adenosyl-L-methionine site is built by Asn-29, Leu-31, Gly-56, Glu-77, Asp-102, and Asn-128.

This sequence belongs to the class I-like SAM-binding methyltransferase superfamily. rRNA adenine N(6)-methyltransferase family. RsmA subfamily.

The protein localises to the cytoplasm. The catalysed reaction is adenosine(1518)/adenosine(1519) in 16S rRNA + 4 S-adenosyl-L-methionine = N(6)-dimethyladenosine(1518)/N(6)-dimethyladenosine(1519) in 16S rRNA + 4 S-adenosyl-L-homocysteine + 4 H(+). In terms of biological role, specifically dimethylates two adjacent adenosines (A1518 and A1519) in the loop of a conserved hairpin near the 3'-end of 16S rRNA in the 30S particle. May play a critical role in biogenesis of 30S subunits. This is Ribosomal RNA small subunit methyltransferase A from Listeria welshimeri serovar 6b (strain ATCC 35897 / DSM 20650 / CCUG 15529 / CIP 8149 / NCTC 11857 / SLCC 5334 / V8).